Consider the following 173-residue polypeptide: Large ribosomal subunit protein uL18 (173 aa).

It belongs to the universal ribosomal protein uL18 family. In terms of assembly, part of the 50S ribosomal subunit. Contacts the 5S and 23S rRNAs.

In terms of biological role, this is one of the proteins that bind and probably mediate the attachment of the 5S RNA into the large ribosomal subunit, where it forms part of the central protuberance. This chain is Large ribosomal subunit protein uL18, found in Methanococcoides burtonii (strain DSM 6242 / NBRC 107633 / OCM 468 / ACE-M).